A 427-amino-acid chain; its full sequence is Tyrosine--tRNA ligase (427 aa).

Tyrosine 33 serves as a coordination point for L-tyrosine. A 'HIGH' region motif is present at residues 38 to 47 (PTASSLTIGN). 2 residues coordinate L-tyrosine: tyrosine 168 and glutamine 172. The short motif at 228 to 232 (KFGKS) is the 'KMSKS' region element. Position 231 (lysine 231) interacts with ATP. One can recognise an S4 RNA-binding domain in the interval 361 to 427 (LDLLSTLTNS…KKNYYLLRFN (67 aa)).

It belongs to the class-I aminoacyl-tRNA synthetase family. TyrS type 1 subfamily. As to quaternary structure, homodimer.

The protein localises to the cytoplasm. It catalyses the reaction tRNA(Tyr) + L-tyrosine + ATP = L-tyrosyl-tRNA(Tyr) + AMP + diphosphate + H(+). Its function is as follows. Catalyzes the attachment of tyrosine to tRNA(Tyr) in a two-step reaction: tyrosine is first activated by ATP to form Tyr-AMP and then transferred to the acceptor end of tRNA(Tyr). The protein is Tyrosine--tRNA ligase of Cytophaga hutchinsonii (strain ATCC 33406 / DSM 1761 / CIP 103989 / NBRC 15051 / NCIMB 9469 / D465).